The primary structure comprises 319 residues: Acetyl esterase (319 aa).

The short motif at 91–93 (HGG) is the Involved in the stabilization of the negatively charged intermediate by the formation of the oxyanion hole element. Catalysis depends on residues S165, D262, and H292.

It belongs to the 'GDXG' lipolytic enzyme family. As to quaternary structure, homodimer. Interacts with MalT and MelA.

The protein localises to the cytoplasm. Functionally, displays esterase activity towards short chain fatty esters (acyl chain length of up to 8 carbons). Able to hydrolyze triacetylglycerol (triacetin) and tributyrylglycerol (tributyrin), but not trioleylglycerol (triolein) or cholesterol oleate. Negatively regulates MalT activity by antagonizing maltotriose binding. Inhibits MelA galactosidase activity. The sequence is that of Acetyl esterase from Escherichia coli O17:K52:H18 (strain UMN026 / ExPEC).